Consider the following 29-residue polypeptide: Dander allergen Equ c 2.0101 (29 aa).

It belongs to the calycin superfamily. Lipocalin family.

The protein resides in the secreted. The sequence is that of Dander allergen Equ c 2.0101 from Equus caballus (Horse).